The chain runs to 139 residues: Cystatin-11 (139 aa).

Positions 1 to 28 are cleaved as a signal peptide; sequence MMARLWKTTWFLLAILVALVAFSYQVKR. 2 cysteine pairs are disulfide-bonded: Cys-94/Cys-102 and Cys-115/Cys-135. Asn-134 carries N-linked (GlcNAc...) asparagine glycosylation.

Belongs to the cystatin family.

The protein resides in the secreted. Its function is as follows. Has antibacterial activity against the Gram-negative bacteria E.coli. May play a role in sperm maturation and fertilization. The sequence is that of Cystatin-11 (Cst11) from Rattus norvegicus (Rat).